Reading from the N-terminus, the 607-residue chain is Thymidine kinase (607 aa).

2 disordered regions span residues 1-160 (MAGF…ADST) and 180-215 (DDKS…PSGL). The span at 17 to 32 (KCQEDESPENERHENF) shows a compositional bias: basic and acidic residues. 3 stretches are compositionally biased toward polar residues: residues 88 to 106 (AAVT…TSCP), 148 to 160 (RKTS…ADST), and 194 to 203 (RRPSSHSALK). 291 to 298 (GAPGVGKT) is a binding site for ATP. The Proton acceptor role is filled by Glu317. Gln355 is a substrate binding site. An ATP-binding site is contributed by Arg445. Position 451 (Arg451) interacts with substrate.

The protein belongs to the herpesviridae thymidine kinase family. In terms of assembly, homodimer.

The protein resides in the virion tegument. It is found in the host nucleus. It catalyses the reaction thymidine + ATP = dTMP + ADP + H(+). Functionally, catalyzes the transfer of the gamma-phospho group of ATP to thymidine to generate dTMP in the salvage pathway of pyrimidine synthesis. The dTMP serves as a substrate for DNA polymerase during viral DNA replication. Allows the virus to be reactivated and to grow in non-proliferative cells lacking a high concentration of phosphorylated nucleic acid precursors. This chain is Thymidine kinase, found in Epstein-Barr virus (strain GD1) (HHV-4).